The following is a 331-amino-acid chain: Sucrose operon repressor (331 aa).

One can recognise an HTH lacI-type domain in the interval Met-1–Ala-56. The segment at residues Leu-4 to His-23 is a DNA-binding region (H-T-H motif).

In terms of biological role, repressor for the csc operon. Binds D-fructose as an inducer. The protein is Sucrose operon repressor (cscR) of Escherichia coli.